Consider the following 505-residue polypeptide: Alkylglycerol monooxygenase (505 aa).

The next 2 helical transmembrane spans lie at 56-76 and 104-124; these read VSAWWLVFLTAEFFILFISGH and AVAIFLYVIVWDNWRILELPW. Residues 130 to 262 form the Fatty acid hydroxylase domain; the sequence is WIFCLFFQDF…FIIWDKMFNT (133 aa). The Histidine box-1 motif lies at 145–149; sequence HRAVH. The Histidine box-2 motif lies at 158–162; that stretch reads HTIHH. The Histidine box-3 signature appears at 234–238; it reads HRVHH. A run of 4 helical transmembrane segments spans residues 366–386, 396–416, 430–450, and 452–472; these read ILVKVYVASSFLLLLAIFFHF, LDCTVKIAYFVVTMQCFGAFF, CCGVLIYYGVLMFDHIGAGTH, and LFVISLHIMAIALWTTDVLVE.

This sequence belongs to the sterol desaturase family. TMEM195 subfamily. The cofactor is Fe cation.

It localises to the endoplasmic reticulum membrane. It catalyses the reaction 1-O-(1,2-saturated-alkyl)-sn-glycerol + (6R)-L-erythro-5,6,7,8-tetrahydrobiopterin + O2 = a 1-(1-hydroxyalkyl)-sn-glycerol + (6R)-L-erythro-6,7-dihydrobiopterin + H2O. In terms of biological role, glyceryl-ether monooxygenase that cleaves the O-alkyl bond of ether lipids. The chain is Alkylglycerol monooxygenase from Caenorhabditis elegans.